Reading from the N-terminus, the 526-residue chain is MGKVIRSLSRFGKKVGNALTSNTAKKIYSTIGKAAERFAESEIGSAAIDGLVQGSVHSILTGESYGEYVKQAVLLNVLGSGEEIPDPLSQGETEIQAKLRELEDEQRNELVRLKYNDKIKEKFGEELEEVYEFMNGAAKAEVEDEKQFDILNKAVTSYNKILTEEDLQMRRLANALQKEIGERTHAETVMVKEYRNKIDALKNAIEIERDGMQEEAIQEIAGMTRGVLEAASEEVPLIGAGMATAVATGRAIEGAYKLKKVINALSGIDLTHLRTPKIEPSVVSTILEYRTRAIPDSALAVSVLSKNRAIQENHKELIHIKDEILPRFKKAMDEEKEICGIEDKTIHPKVMMRFKIPRAQQPQIHVYSAPWDSDDVFFFHCISHHHANESFFLGFDLSIDLVHYEDLTAHWHALGAAQMAMGRTLSEAYKEFLNMAISNAYGTQMHTRRLVRSKMVHPIYLGSLHYDISFLDLRGNAQRIVYDDELQMHILRGPIHFQRRAILGALKFGCKVLGDRLDVPLFLRNA.

The tract at residues Met-1–Glu-42 is involved in membrane permeabilization.

The protein belongs to the orbivirus VP5 family.

It is found in the virion. Its function is as follows. VP5 protein is one of the two proteins (with VP2) which constitute the virus particle outer capsid. Acts as a membrane permeabilization protein that mediates release of viral particles from endosomal compartments into the cytoplasm. Permeabilization activity is probably negatively regulated by VP2 and is triggered by endosomal degradation of VP2 and exposure to low pH. This Bluetongue virus 1 (isolate Australia) (BTV 1) protein is Outer capsid protein VP5 (Segment-6).